A 252-amino-acid chain; its full sequence is 3-deoxy-manno-octulosonate cytidylyltransferase 2 (252 aa).

It belongs to the KdsB family.

It localises to the cytoplasm. It carries out the reaction 3-deoxy-alpha-D-manno-oct-2-ulosonate + CTP = CMP-3-deoxy-beta-D-manno-octulosonate + diphosphate. The protein operates within nucleotide-sugar biosynthesis; CMP-3-deoxy-D-manno-octulosonate biosynthesis; CMP-3-deoxy-D-manno-octulosonate from 3-deoxy-D-manno-octulosonate and CTP: step 1/1. It functions in the pathway bacterial outer membrane biogenesis; lipopolysaccharide biosynthesis. Activates KDO (a required 8-carbon sugar) for incorporation into bacterial lipopolysaccharide in Gram-negative bacteria. This Actinobacillus pleuropneumoniae serotype 5b (strain L20) protein is 3-deoxy-manno-octulosonate cytidylyltransferase 2.